Reading from the N-terminus, the 701-residue chain is Elongation factor G (701 aa).

Residues 8–290 (TQYRNIGISA…AIIEYLPSPK (283 aa)) form the tr-type G domain. Residues 17–24 (AHIDAGKT), 88–92 (DTPGH), and 142–145 (NKMD) each bind GTP.

The protein belongs to the TRAFAC class translation factor GTPase superfamily. Classic translation factor GTPase family. EF-G/EF-2 subfamily.

It localises to the cytoplasm. In terms of biological role, catalyzes the GTP-dependent ribosomal translocation step during translation elongation. During this step, the ribosome changes from the pre-translocational (PRE) to the post-translocational (POST) state as the newly formed A-site-bound peptidyl-tRNA and P-site-bound deacylated tRNA move to the P and E sites, respectively. Catalyzes the coordinated movement of the two tRNA molecules, the mRNA and conformational changes in the ribosome. This Buchnera aphidicola subsp. Cinara cedri (strain Cc) protein is Elongation factor G.